A 257-amino-acid chain; its full sequence is Dihydroorotate dehydrogenase B (NAD(+)), electron transfer subunit (257 aa).

The 101-residue stretch at 2–102 folds into the FAD-binding FR-type domain; it reads MKQEQMTVVR…LGPLGNGFPL (101 aa). Residues 53 to 56, 70 to 72, and 77 to 78 contribute to the FAD site; these read RPLS, IYR, and GT. [2Fe-2S] cluster is bound by residues C221, C226, C229, and C244.

It belongs to the PyrK family. Heterotetramer of 2 PyrK and 2 PyrD type B subunits. It depends on [2Fe-2S] cluster as a cofactor. FAD is required as a cofactor.

It participates in pyrimidine metabolism; UMP biosynthesis via de novo pathway; orotate from (S)-dihydroorotate (NAD(+) route): step 1/1. Functionally, responsible for channeling the electrons from the oxidation of dihydroorotate from the FMN redox center in the PyrD type B subunit to the ultimate electron acceptor NAD(+). This is Dihydroorotate dehydrogenase B (NAD(+)), electron transfer subunit from Geobacillus sp. (strain WCH70).